The primary structure comprises 322 residues: UDP-galactose transporter homolog 1 (322 aa).

The next 5 helical transmembrane spans lie at 4 to 24, 43 to 63, 76 to 96, 105 to 125, and 129 to 149; these read FMRQ…SWAV, ALLS…WNWF, FLGY…FGYA, TVIL…VFVY, and FPPH…IFSY. Asn-152 carries N-linked (GlcNAc...) asparagine glycosylation. The next 4 membrane-spanning stretches (helical) occupy residues 164–184, 199–219, 250–270, and 290–310; these read SPIG…TNTT, MMIA…ISPF, LFIF…ITLT, and IQWL…GLKI. 2 N-linked (GlcNAc...) asparagine glycosylation sites follow: Asn-313 and Asn-314.

Belongs to the nucleotide-sugar transporter family. SLC35B subfamily.

It localises to the endoplasmic reticulum membrane. Its function is as follows. May be involved in specific transport of UDP-Gal from the cytosol to the Golgi lumen. Involved in the maintenance of optimal conditions for the folding of secretory pathway proteins in the endoplasmic reticulum. This Schizosaccharomyces pombe (strain 972 / ATCC 24843) (Fission yeast) protein is UDP-galactose transporter homolog 1 (hut1).